The primary structure comprises 578 residues: Proline--tRNA ligase (578 aa).

Belongs to the class-II aminoacyl-tRNA synthetase family. ProS type 1 subfamily. In terms of assembly, homodimer.

The protein localises to the cytoplasm. It catalyses the reaction tRNA(Pro) + L-proline + ATP = L-prolyl-tRNA(Pro) + AMP + diphosphate. In terms of biological role, catalyzes the attachment of proline to tRNA(Pro) in a two-step reaction: proline is first activated by ATP to form Pro-AMP and then transferred to the acceptor end of tRNA(Pro). As ProRS can inadvertently accommodate and process non-cognate amino acids such as alanine and cysteine, to avoid such errors it has two additional distinct editing activities against alanine. One activity is designated as 'pretransfer' editing and involves the tRNA(Pro)-independent hydrolysis of activated Ala-AMP. The other activity is designated 'posttransfer' editing and involves deacylation of mischarged Ala-tRNA(Pro). The misacylated Cys-tRNA(Pro) is not edited by ProRS. The chain is Proline--tRNA ligase from Paraburkholderia xenovorans (strain LB400).